Reading from the N-terminus, the 517-residue chain is Maturase K (517 aa).

This sequence belongs to the intron maturase 2 family. MatK subfamily.

Its subcellular location is the plastid. The protein resides in the chloroplast. Its function is as follows. Usually encoded in the trnK tRNA gene intron. Probably assists in splicing its own and other chloroplast group II introns. This Dracula chimaera protein is Maturase K.